A 463-amino-acid polypeptide reads, in one-letter code: Adenosylhomocysteinase (463 aa).

Residues Thr-54, Asp-128, and Glu-189 each coordinate substrate. 190–192 lines the NAD(+) pocket; it reads TTT. Residues Lys-219 and Asp-223 each coordinate substrate. NAD(+) contacts are provided by residues Asn-224, 253 to 258, Glu-276, Asn-311, 332 to 334, and Asn-377; these read GYGDVG and IGH.

This sequence belongs to the adenosylhomocysteinase family. In terms of assembly, homotetramer. NAD(+) is required as a cofactor.

It is found in the cytoplasm. It catalyses the reaction S-adenosyl-L-homocysteine + H2O = L-homocysteine + adenosine. It participates in amino-acid biosynthesis; L-homocysteine biosynthesis; L-homocysteine from S-adenosyl-L-homocysteine: step 1/1. In terms of biological role, may play a key role in the regulation of the intracellular concentration of adenosylhomocysteine. The polypeptide is Adenosylhomocysteinase (Rhodobacter capsulatus (strain ATCC BAA-309 / NBRC 16581 / SB1003)).